A 78-amino-acid chain; its full sequence is Acyl carrier protein (78 aa).

The Carrier domain occupies 2–77; that stretch reads STIEERVKKI…AAIDYVNSHK (76 aa). Serine 37 is modified (O-(pantetheine 4'-phosphoryl)serine).

This sequence belongs to the acyl carrier protein (ACP) family. 4'-phosphopantetheine is transferred from CoA to a specific serine of apo-ACP by AcpS. This modification is essential for activity because fatty acids are bound in thioester linkage to the sulfhydryl of the prosthetic group.

It is found in the cytoplasm. The protein operates within lipid metabolism; fatty acid biosynthesis. Its function is as follows. Carrier of the growing fatty acid chain in fatty acid biosynthesis. This is Acyl carrier protein from Pseudomonas putida (strain GB-1).